The chain runs to 300 residues: Iron-dependent extradiol dioxygenase (300 aa).

VOC domains follow at residues 5–120 and 142–270; these read SLGY…VFHG and GMGH…FGCE. Histidine 145 is a binding site for Fe cation. Substrate is bound by residues histidine 200, histidine 215, aspartate 250, and tyrosine 256. Histidine 215 serves as a coordination point for Fe cation. Residue glutamate 266 participates in Fe cation binding.

This sequence belongs to the extradiol ring-cleavage dioxygenase family. Homodimer, but may form a homooctamer. Fe(2+) is required as a cofactor.

It carries out the reaction 3,4-dihydroxy-9,10-secoandrosta-1,3,5(10)-triene-9,17-dione + O2 = (1E,2Z)-3-hydroxy-5,9,17-trioxo-4,5:9,10-disecoandrosta-1(10),2-dien-4-oate + H(+). Its pathway is steroid metabolism; cholesterol metabolism. Its function is as follows. Catalyzes the meta-cleavage of 3,4-dihydroxy-9,10-seconandrost-1,3,5(10)-triene-9,17-dione (3,4-DHSA) to produce 4,5-9,10-diseco-3-hydroxy-5,9,17-trioxoandrosta-1(10),2-diene-4-oic acid (4,9-DSHA). The chain is Iron-dependent extradiol dioxygenase (hsaC) from Mycobacterium tuberculosis (strain CDC 1551 / Oshkosh).